The sequence spans 144 residues: Granulocyte-macrophage colony-stimulating factor (144 aa).

The first 17 residues, 1–17 (MWLQNLLLLGTVVCSFS), serve as a signal peptide directing secretion. Ser24 carries O-linked (GalNAc...) serine glycosylation. Thr27 carries an O-linked (GalNAc...) threonine glycan. N-linked (GlcNAc...) asparagine glycosylation is found at Asn44 and Asn54. 2 disulfide bridges follow: Cys71/Cys113 and Cys105/Cys138.

It belongs to the GM-CSF family. As to quaternary structure, monomer. The signaling GM-CSF receptor complex is a dodecamer of two head-to-head hexamers of two alpha, two beta, and two ligand subunits.

It is found in the secreted. Functionally, cytokine that stimulates the growth and differentiation of hematopoietic precursor cells from various lineages, including granulocytes, macrophages, eosinophils and erythrocytes. The chain is Granulocyte-macrophage colony-stimulating factor (CSF2) from Cervus elaphus (Red deer).